Here is a 461-residue protein sequence, read N- to C-terminus: Glycogen synthase (461 aa).

Residue lysine 15 participates in ADP-alpha-D-glucose binding.

It belongs to the glycosyltransferase 1 family. Bacterial/plant glycogen synthase subfamily.

It catalyses the reaction [(1-&gt;4)-alpha-D-glucosyl](n) + ADP-alpha-D-glucose = [(1-&gt;4)-alpha-D-glucosyl](n+1) + ADP + H(+). It functions in the pathway glycan biosynthesis; glycogen biosynthesis. In terms of biological role, synthesizes alpha-1,4-glucan chains using ADP-glucose. This is Glycogen synthase from Fusobacterium nucleatum subsp. nucleatum (strain ATCC 25586 / DSM 15643 / BCRC 10681 / CIP 101130 / JCM 8532 / KCTC 2640 / LMG 13131 / VPI 4355).